Consider the following 454-residue polypeptide: Nuclear distribution protein PAC1-1 (454 aa).

The region spanning 9-41 (QAEELHRALIAYLSSNNLTSTAAALRAEIGLGE) is the LisH domain. A disordered region spans residues 71–93 (RHTSQLSNATPTSRQNKDPVNWL). Residues 73–84 (TSQLSNATPTSR) show a composition bias toward polar residues. WD repeat units lie at residues 104–145 (SHRQ…RTIK), 147–187 (HTKT…KNIR), 191–236 (GHDH…CVKT), 239–278 (GHAE…PEPK), 283–342 (GHEH…IKIL), 344–383 (GHDN…RCVK), and 388–450 (AHAH…LNVR).

This sequence belongs to the WD repeat LIS1/nudF family. Self-associates. Interacts with NDL1 and dynein.

The protein localises to the cytoplasm. It is found in the cytoskeleton. The protein resides in the spindle pole. Positively regulates the activity of the minus-end directed microtubule motor protein dynein. May enhance dynein-mediated microtubule sliding by targeting dynein to the microtubule plus end. Required for nuclear migration during vegetative growth as well as development. Required for retrograde early endosome (EE) transport from the hyphal tip. Required for localization of dynein to the mitotic spindle poles. Recruits additional proteins to the dynein complex at SPBs. In Chaetomium globosum (strain ATCC 6205 / CBS 148.51 / DSM 1962 / NBRC 6347 / NRRL 1970) (Soil fungus), this protein is Nuclear distribution protein PAC1-1.